The chain runs to 179 residues: Ribosome maturation factor RimM (179 aa).

A PRC barrel domain is found at 95-174 (KDEFFYFDIL…QIFCTQDAFL (80 aa)).

This sequence belongs to the RimM family. As to quaternary structure, binds ribosomal protein uS19.

Its subcellular location is the cytoplasm. Its function is as follows. An accessory protein needed during the final step in the assembly of 30S ribosomal subunit, possibly for assembly of the head region. Essential for efficient processing of 16S rRNA. May be needed both before and after RbfA during the maturation of 16S rRNA. It has affinity for free ribosomal 30S subunits but not for 70S ribosomes. The protein is Ribosome maturation factor RimM of Campylobacter jejuni subsp. jejuni serotype O:2 (strain ATCC 700819 / NCTC 11168).